The following is a 419-amino-acid chain: eIF5-mimic protein 2 (419 aa).

An N-acetylmethionine modification is found at Met1. A compositionally biased stretch (polar residues) spans 1 to 15 (MNNQKQQKPTLSGQR). The tract at residues 1 to 26 (MNNQKQQKPTLSGQRFKTRKRDEKER) is disordered. Position 12 is a phosphoserine (Ser12). One can recognise a W2 domain in the interval 247–414 (NQQTIGARKE…KNAEEESESE (168 aa)). Residue Lys368 forms a Glycyl lysine isopeptide (Lys-Gly) (interchain with G-Cter in SUMO2) linkage. Phosphoserine is present on residues Ser411 and Ser413.

This sequence belongs to the BZW family.

In terms of biological role, translation initiation regulator which represses repeat-associated non-AUG (RAN) initiated translation probably by acting as a competitive inhibitor of eukaryotic translation initiation factor 5 (EIF5) function. Enhances histone H4 gene transcription but does not seem to bind DNA directly. This Pongo abelii (Sumatran orangutan) protein is eIF5-mimic protein 2 (BZW1).